A 199-amino-acid chain; its full sequence is N-(5'-phosphoribosyl)anthranilate isomerase (199 aa).

Belongs to the TrpF family.

The enzyme catalyses N-(5-phospho-beta-D-ribosyl)anthranilate = 1-(2-carboxyphenylamino)-1-deoxy-D-ribulose 5-phosphate. It participates in amino-acid biosynthesis; L-tryptophan biosynthesis; L-tryptophan from chorismate: step 3/5. This Lacticaseibacillus casei (Lactobacillus casei) protein is N-(5'-phosphoribosyl)anthranilate isomerase (trpF).